Consider the following 476-residue polypeptide: Serine--tRNA ligase (476 aa).

279–281 (TAE) contributes to the L-serine binding site. 310–312 (RAE) contributes to the ATP binding site. Position 333 (Glu-333) interacts with L-serine. 400 to 403 (EISS) serves as a coordination point for ATP. Ser-435 lines the L-serine pocket.

Belongs to the class-II aminoacyl-tRNA synthetase family. Type-1 seryl-tRNA synthetase subfamily. As to quaternary structure, homodimer. The tRNA molecule binds across the dimer.

The protein resides in the cytoplasm. The enzyme catalyses tRNA(Ser) + L-serine + ATP = L-seryl-tRNA(Ser) + AMP + diphosphate + H(+). It carries out the reaction tRNA(Sec) + L-serine + ATP = L-seryl-tRNA(Sec) + AMP + diphosphate + H(+). Its pathway is aminoacyl-tRNA biosynthesis; selenocysteinyl-tRNA(Sec) biosynthesis; L-seryl-tRNA(Sec) from L-serine and tRNA(Sec): step 1/1. In terms of biological role, catalyzes the attachment of serine to tRNA(Ser). Is also able to aminoacylate tRNA(Sec) with serine, to form the misacylated tRNA L-seryl-tRNA(Sec), which will be further converted into selenocysteinyl-tRNA(Sec). The protein is Serine--tRNA ligase of Rhodopseudomonas palustris (strain BisA53).